The following is a 314-amino-acid chain: Homoserine O-succinyltransferase (314 aa).

Catalysis depends on Cys-142, which acts as the Acyl-thioester intermediate. Residues Lys-163 and Ser-192 each contribute to the substrate site. Residue His-235 is the Proton acceptor of the active site. Residue Glu-237 is part of the active site. Residue Arg-249 coordinates substrate.

The protein belongs to the MetA family.

Its subcellular location is the cytoplasm. The catalysed reaction is L-homoserine + succinyl-CoA = O-succinyl-L-homoserine + CoA. The protein operates within amino-acid biosynthesis; L-methionine biosynthesis via de novo pathway; O-succinyl-L-homoserine from L-homoserine: step 1/1. Functionally, transfers a succinyl group from succinyl-CoA to L-homoserine, forming succinyl-L-homoserine. This is Homoserine O-succinyltransferase from Shewanella sediminis (strain HAW-EB3).